Consider the following 181-residue polypeptide: Dual-action ribosomal maturation protein DarP (181 aa).

The segment at 1–23 is disordered; the sequence is MTGIKKPMSQYQDDNELEDWGPS.

The protein belongs to the DarP family.

It localises to the cytoplasm. Functionally, member of a network of 50S ribosomal subunit biogenesis factors which assembles along the 30S-50S interface, preventing incorrect 23S rRNA structures from forming. Promotes peptidyl transferase center (PTC) maturation. The chain is Dual-action ribosomal maturation protein DarP from Aeromonas salmonicida (strain A449).